The chain runs to 195 residues: Putative EGF-like and EMI domain-containing protein 1 (195 aa).

Positions 86-97 (CTCKSGYQGNRC) constitute an EGF-like domain.

The chain is Putative EGF-like and EMI domain-containing protein 1 (EGFEM1P) from Homo sapiens (Human).